We begin with the raw amino-acid sequence, 229 residues long: MYDISGWKHVFKLDPNKELSDEHLEMICESGTDAVIVGGSDGVTIDNVLHMLVSIRRYAVPCVLEVSDVEAITPGFDFYYIPSVLNSRKVEWVTGVHHEALKEFGDIMDWDEIFMEGYCVLNPEAKVAQLTDAKCDVTEDDVIAYARLADKLLRLPIFYLEYSGTYGDVELVKNVKAELKQAKLYYGGGISNAEQAKEMAQHADTVVVGNIIYDDIKAALKTVKAVKGE.

Lys12 serves as a coordination point for sn-glycerol 1-phosphate. Residues Asp14 and Ser40 each coordinate Mg(2+). Residues 159–164 (YLEYSG), Gly189, and 209–210 (GN) each bind sn-glycerol 1-phosphate.

This sequence belongs to the GGGP/HepGP synthase family. Group I subfamily. In terms of assembly, homodimer. Requires Mg(2+) as cofactor.

It catalyses the reaction sn-glycerol 1-phosphate + all-trans-heptaprenyl diphosphate = 3-heptaprenyl-sn-glycero-1-phosphate + diphosphate. It functions in the pathway membrane lipid metabolism; glycerophospholipid metabolism. Prenyltransferase that catalyzes in vivo the transfer of the heptaprenyl moiety of heptaprenyl pyrophosphate (HepPP; 35 carbon atoms) to the C3 hydroxyl of sn-glycerol-1-phosphate (G1P), producing heptaprenylglyceryl phosphate (HepGP). This reaction is an ether-bond-formation step in the biosynthesis of archaea-type G1P-based membrane lipids found in Bacillales. The protein is Heptaprenylglyceryl phosphate synthase of Bacillus anthracis (strain A0248).